The following is a 126-amino-acid chain: UPF0102 protein BCAN_A0183 (126 aa).

The protein belongs to the UPF0102 family.

The sequence is that of UPF0102 protein BCAN_A0183 from Brucella canis (strain ATCC 23365 / NCTC 10854 / RM-666).